Reading from the N-terminus, the 535-residue chain is UDP-glycosyltransferase stmC (535 aa).

Residues Asn-70 and Asn-422 are each glycosylated (N-linked (GlcNAc...) asparagine). The chain crosses the membrane as a helical span at residues 506-526 (ASNLDLYIVCIAFVAVPVGVA).

It belongs to the glycosyltransferase 28 family.

The protein resides in the membrane. It catalyses the reaction stromemycin aglycone + UDP-alpha-D-glucose = stromemycin + UDP + H(+). The enzyme catalyses exophillate aglycone + UDP-alpha-D-glucose = exophillate + UDP + H(+). It functions in the pathway mycotoxin biosynthesis. In terms of biological role, UDP-glycosyltransferase; part of the gene cluster that mediates the biosynthesis of stromemycin, a depside C-glucoside with two unsaturated C9 side chains belonging to aromatic polyketide glycosides. Acts as the tailoring enzyme responsible for 3-C-glucosylation of bininalkenylresorcylic acid produced by the combined action of the HR-PKS stmA and the NR-PKS stmB to yield stromemycin. Possesses a relatively strict acceptor specificity towards bininalkenylresorcylic acid for C-glycosylation, but is able to use several donors including UDP-alpha-D-galactose, UDP-alpha-D-xylose, UDP-alpha-D-4-keto-6-deoxyglucose, UDP-alpha-D-quinovose, and UDP-beta-L-rhamnose. The polypeptide is UDP-glycosyltransferase stmC (Aspergillus ustus).